The chain runs to 329 residues: Phosphate import ATP-binding protein PstB (329 aa).

In terms of domain architecture, ABC transporter spans 83 to 325; sequence FEIRNFNFWY…PKQKATNSYI (243 aa). Position 116–123 (116–123) interacts with ATP; sequence GKSGCGKS.

This sequence belongs to the ABC transporter superfamily. Phosphate importer (TC 3.A.1.7) family. As to quaternary structure, the complex is composed of two ATP-binding proteins (PstB), two transmembrane proteins (PstC and PstA) and a solute-binding protein (PstS).

It is found in the cell membrane. The enzyme catalyses phosphate(out) + ATP + H2O = ADP + 2 phosphate(in) + H(+). Functionally, part of the ABC transporter complex PstSACB involved in phosphate import. Responsible for energy coupling to the transport system. The protein is Phosphate import ATP-binding protein PstB of Mycoplasma genitalium (strain ATCC 33530 / DSM 19775 / NCTC 10195 / G37) (Mycoplasmoides genitalium).